Here is a 305-residue protein sequence, read N- to C-terminus: GS homeobox 2 (305 aa).

Disordered regions lie at residues 115-151 and 259-305; these read DAQF…AAAA and KKEG…ISPL. Residues 123–140 are compositionally biased toward basic residues; sequence SHAHHHHHPPQHHHHHHQ. Low complexity predominate over residues 141–151; it reads PQQPGSAAAAA. The segment at residues 203 to 262 is a DNA-binding region (homeobox); it reads GKRMRTAFTSTQLLELEREFSSNMYLSRLRRIEIATYLNLSEKQVKIWFQNRRVKHKKEG.

The protein belongs to the Antp homeobox family.

The protein resides in the nucleus. Functionally, transcription factor that binds 5'-CNAATTAG-3' DNA sequence and regulates the expression of numerous genes including genes important for brain development. During telencephalic development, causes ventralization of pallial progenitors and, depending on the developmental stage, specifies different neuronal fates. At early stages, necessary and sufficient to correctly specify the ventral lateral ganglionic eminence (LGE) and its major derivatives, the striatal projection neurons. At later stages, may specify LGE progenitors toward dorsal LGE fates, including olfactory bulb interneurons. This Mus musculus (Mouse) protein is GS homeobox 2 (Gsx2).